The following is a 173-amino-acid chain: Peptide methionine sulfoxide reductase MsrA (173 aa).

Residue C10 is part of the active site.

This sequence belongs to the MsrA Met sulfoxide reductase family.

The catalysed reaction is L-methionyl-[protein] + [thioredoxin]-disulfide + H2O = L-methionyl-(S)-S-oxide-[protein] + [thioredoxin]-dithiol. It catalyses the reaction [thioredoxin]-disulfide + L-methionine + H2O = L-methionine (S)-S-oxide + [thioredoxin]-dithiol. Functionally, has an important function as a repair enzyme for proteins that have been inactivated by oxidation. Catalyzes the reversible oxidation-reduction of methionine sulfoxide in proteins to methionine. The sequence is that of Peptide methionine sulfoxide reductase MsrA from Psychrobacter arcticus (strain DSM 17307 / VKM B-2377 / 273-4).